A 124-amino-acid polypeptide reads, in one-letter code: Small ribosomal subunit protein uS12 (124 aa).

3-methylthioaspartic acid is present on aspartate 89.

It belongs to the universal ribosomal protein uS12 family. Part of the 30S ribosomal subunit. Contacts proteins S8 and S17. May interact with IF1 in the 30S initiation complex.

In terms of biological role, with S4 and S5 plays an important role in translational accuracy. Functionally, interacts with and stabilizes bases of the 16S rRNA that are involved in tRNA selection in the A site and with the mRNA backbone. Located at the interface of the 30S and 50S subunits, it traverses the body of the 30S subunit contacting proteins on the other side and probably holding the rRNA structure together. The combined cluster of proteins S8, S12 and S17 appears to hold together the shoulder and platform of the 30S subunit. The protein is Small ribosomal subunit protein uS12 of Shewanella amazonensis (strain ATCC BAA-1098 / SB2B).